The primary structure comprises 335 residues: Holliday junction branch migration complex subunit RuvB (335 aa).

The large ATPase domain (RuvB-L) stretch occupies residues 4-184 (ADRIISSNAQ…FGIVQRLEFY (181 aa)). ATP-binding positions include I23, R24, G65, K68, T69, T70, 131–133 (EDY), R174, Y184, and R221. T69 is a binding site for Mg(2+). The tract at residues 185 to 255 (SVEDLTSIVA…IAKSALSMLD (71 aa)) is small ATPAse domain (RuvB-S). The interval 258 to 335 (QAGFDYLDRK…RHFGLDKLTE (78 aa)) is head domain (RuvB-H). Positions 294, 313, and 318 each coordinate DNA.

This sequence belongs to the RuvB family. As to quaternary structure, homohexamer. Forms an RuvA(8)-RuvB(12)-Holliday junction (HJ) complex. HJ DNA is sandwiched between 2 RuvA tetramers; dsDNA enters through RuvA and exits via RuvB. An RuvB hexamer assembles on each DNA strand where it exits the tetramer. Each RuvB hexamer is contacted by two RuvA subunits (via domain III) on 2 adjacent RuvB subunits; this complex drives branch migration. In the full resolvosome a probable DNA-RuvA(4)-RuvB(12)-RuvC(2) complex forms which resolves the HJ.

It localises to the cytoplasm. It catalyses the reaction ATP + H2O = ADP + phosphate + H(+). Functionally, the RuvA-RuvB-RuvC complex processes Holliday junction (HJ) DNA during genetic recombination and DNA repair, while the RuvA-RuvB complex plays an important role in the rescue of blocked DNA replication forks via replication fork reversal (RFR). RuvA specifically binds to HJ cruciform DNA, conferring on it an open structure. The RuvB hexamer acts as an ATP-dependent pump, pulling dsDNA into and through the RuvAB complex. RuvB forms 2 homohexamers on either side of HJ DNA bound by 1 or 2 RuvA tetramers; 4 subunits per hexamer contact DNA at a time. Coordinated motions by a converter formed by DNA-disengaged RuvB subunits stimulates ATP hydrolysis and nucleotide exchange. Immobilization of the converter enables RuvB to convert the ATP-contained energy into a lever motion, pulling 2 nucleotides of DNA out of the RuvA tetramer per ATP hydrolyzed, thus driving DNA branch migration. The RuvB motors rotate together with the DNA substrate, which together with the progressing nucleotide cycle form the mechanistic basis for DNA recombination by continuous HJ branch migration. Branch migration allows RuvC to scan DNA until it finds its consensus sequence, where it cleaves and resolves cruciform DNA. The polypeptide is Holliday junction branch migration complex subunit RuvB (Mannheimia succiniciproducens (strain KCTC 0769BP / MBEL55E)).